We begin with the raw amino-acid sequence, 213 residues long: Agglutinin isolectin 2 (213 aa).

The first 27 residues, 1–27, serve as a signal peptide directing secretion; that stretch reads MRKMMSTMALTLGAAVFLAFAAATAQA. Residue Gln28 is modified to Pyrrolidone carboxylic acid. 4 consecutive Chitin-binding type-1 domains span residues 28-69, 70-112, 113-155, and 156-198; these read QRCG…ACWT, SKRC…PCRA, DIKC…ACST, and DKPC…GCDA. 16 disulfides stabilise this stretch: Cys30–Cys45, Cys39–Cys51, Cys44–Cys58, Cys62–Cys67, Cys73–Cys88, Cys82–Cys94, Cys87–Cys101, Cys105–Cys110, Cys116–Cys131, Cys125–Cys137, Cys130–Cys144, Cys148–Cys153, Cys159–Cys174, Cys168–Cys180, Cys173–Cys187, and Cys191–Cys196. A substrate-binding site is contributed by 37-39; sequence MEC. A substrate-binding site is contributed by 89–100; that stretch reads SQYGHCGFGAEY. A substrate-binding site is contributed by 141–142; sequence SE. Residues 199-213 constitute a propeptide that is removed on maturation; the sequence is VFAGAITANSTLLAE.

As to quaternary structure, homodimer, u-shaped.

Functionally, N-acetyl-D-glucosamine / N-acetyl-D-neuraminic acid binding lectin. This chain is Agglutinin isolectin 2, found in Triticum aestivum (Wheat).